The following is an 85-amino-acid chain: Elongation factor 1-beta (85 aa).

This sequence belongs to the EF-1-beta/EF-1-delta family.

In terms of biological role, promotes the exchange of GDP for GTP in EF-1-alpha/GDP, thus allowing the regeneration of EF-1-alpha/GTP that could then be used to form the ternary complex EF-1-alpha/GTP/AAtRNA. The chain is Elongation factor 1-beta from Methanospirillum hungatei JF-1 (strain ATCC 27890 / DSM 864 / NBRC 100397 / JF-1).